The sequence spans 95 residues: Aspartyl/glutamyl-tRNA(Asn/Gln) amidotransferase subunit C (95 aa).

It belongs to the GatC family. As to quaternary structure, heterotrimer of A, B and C subunits.

The enzyme catalyses L-glutamyl-tRNA(Gln) + L-glutamine + ATP + H2O = L-glutaminyl-tRNA(Gln) + L-glutamate + ADP + phosphate + H(+). The catalysed reaction is L-aspartyl-tRNA(Asn) + L-glutamine + ATP + H2O = L-asparaginyl-tRNA(Asn) + L-glutamate + ADP + phosphate + 2 H(+). Functionally, allows the formation of correctly charged Asn-tRNA(Asn) or Gln-tRNA(Gln) through the transamidation of misacylated Asp-tRNA(Asn) or Glu-tRNA(Gln) in organisms which lack either or both of asparaginyl-tRNA or glutaminyl-tRNA synthetases. The reaction takes place in the presence of glutamine and ATP through an activated phospho-Asp-tRNA(Asn) or phospho-Glu-tRNA(Gln). The polypeptide is Aspartyl/glutamyl-tRNA(Asn/Gln) amidotransferase subunit C (Desulforapulum autotrophicum (strain ATCC 43914 / DSM 3382 / VKM B-1955 / HRM2) (Desulfobacterium autotrophicum)).